The following is a 155-amino-acid chain: SsrA-binding protein (155 aa).

This sequence belongs to the SmpB family.

The protein localises to the cytoplasm. Required for rescue of stalled ribosomes mediated by trans-translation. Binds to transfer-messenger RNA (tmRNA), required for stable association of tmRNA with ribosomes. tmRNA and SmpB together mimic tRNA shape, replacing the anticodon stem-loop with SmpB. tmRNA is encoded by the ssrA gene; the 2 termini fold to resemble tRNA(Ala) and it encodes a 'tag peptide', a short internal open reading frame. During trans-translation Ala-aminoacylated tmRNA acts like a tRNA, entering the A-site of stalled ribosomes, displacing the stalled mRNA. The ribosome then switches to translate the ORF on the tmRNA; the nascent peptide is terminated with the 'tag peptide' encoded by the tmRNA and targeted for degradation. The ribosome is freed to recommence translation, which seems to be the essential function of trans-translation. The chain is SsrA-binding protein from Streptococcus suis (strain 98HAH33).